Consider the following 154-residue polypeptide: Transmembrane protein 35B (154 aa).

Positions Met1–Ala22 are cleaved as a signal peptide. Transmembrane regions (helical) follow at residues Ile63 to Leu83, Glu85 to Leu105, and Cys112 to Ala132.

The protein belongs to the DoxX family.

Its subcellular location is the membrane. The protein is Transmembrane protein 35B of Homo sapiens (Human).